The following is a 194-amino-acid chain: MSNFGRRTWDREEYAEQARSGYDDRSLKATLTPIELQALKSKYTNYDHLIKGSLKDLNKRKLTANTESLSSFKRGKKFGFYCDICNLTFKDTLQYIDHLNHKVHAIKFENLFDEPLIIDIRDNDDVPQEEFELCYHNLIKDFVEVRSMETQSKRKRLLDTDVEKAKKVATKPSIESESKVSQMMGFSNFATSKK.

The C2H2-type zinc-finger motif lies at 80–104; that stretch reads FYCDICNLTFKDTLQYIDHLNHKVH.

In terms of assembly, component of the U4/U6-U5 tri-snRNP complex composed of the U4, U6 and U5 snRNAs and at least PRP3, PRP4, PRP6, PRP8, PRP18, PRP31, PRP38, SNU13, SNU23, SNU66, SNU114, SPP381, SMB1, SMD1, SMD2, SMD3, SMX2, SMX3, LSM2, LSM3, LSM4, LSM5, LSM6, LSM7, LSM8, BRR2 and DIB1.

The protein localises to the nucleus. Functionally, participates in pre-mRNA splicing. Part of the U4/U5/U6 tri-snRNP complex, one of the building blocks of the spliceosome. The protein is 23 kDa U4/U6.U5 small nuclear ribonucleoprotein component (SNU23) of Saccharomyces cerevisiae (strain ATCC 204508 / S288c) (Baker's yeast).